A 470-amino-acid polypeptide reads, in one-letter code: tRNA modification GTPase MnmE (470 aa).

3 residues coordinate (6S)-5-formyl-5,6,7,8-tetrahydrofolate: K27, E90, and R129. The 161-residue stretch at 231–391 (GVSLVLAGKP…LRDFLNQRFL (161 aa)) folds into the TrmE-type G domain. Residues 241 to 246 (NVGKSS), 260 to 266 (TPFPGTT), and 285 to 288 (DTAG) contribute to the GTP site. Mg(2+)-binding residues include S245 and T266. K470 is a (6S)-5-formyl-5,6,7,8-tetrahydrofolate binding site.

This sequence belongs to the TRAFAC class TrmE-Era-EngA-EngB-Septin-like GTPase superfamily. TrmE GTPase family. As to quaternary structure, homodimer. Heterotetramer of two MnmE and two MnmG subunits. It depends on K(+) as a cofactor.

Its subcellular location is the cytoplasm. In terms of biological role, exhibits a very high intrinsic GTPase hydrolysis rate. Involved in the addition of a carboxymethylaminomethyl (cmnm) group at the wobble position (U34) of certain tRNAs, forming tRNA-cmnm(5)s(2)U34. The protein is tRNA modification GTPase MnmE of Syntrophobacter fumaroxidans (strain DSM 10017 / MPOB).